The following is a 363-amino-acid chain: D-xylulose reductase (363 aa).

The Zn(2+) site is built by cysteine 41, histidine 66, and glutamate 159. An NAD(+)-binding site is contributed by 183 to 188 (GAGPVG).

This sequence belongs to the zinc-containing alcohol dehydrogenase family. Requires Zn(2+) as cofactor.

The catalysed reaction is xylitol + NAD(+) = D-xylulose + NADH + H(+). Its pathway is carbohydrate degradation; L-arabinose degradation via L-arabinitol; D-xylulose 5-phosphate from L-arabinose (fungal route): step 4/5. The sequence is that of D-xylulose reductase (XYL2) from Scheffersomyces stipitis (strain ATCC 58785 / CBS 6054 / NBRC 10063 / NRRL Y-11545) (Yeast).